Consider the following 140-residue polypeptide: Large ribosomal subunit protein uL16c (140 aa).

The protein belongs to the universal ribosomal protein uL16 family. In terms of assembly, part of the 50S ribosomal subunit.

It is found in the plastid. The protein localises to the chloroplast. The sequence is that of Large ribosomal subunit protein uL16c from Cyanidium caldarium (Red alga).